The following is a 319-amino-acid chain: Beta-ketoacyl-[acyl-carrier-protein] synthase III (319 aa).

Catalysis depends on residues Cys115 and His246. The segment at 247 to 251 (QANLR) is ACP-binding. Asn276 is a catalytic residue.

The protein belongs to the thiolase-like superfamily. FabH family. Homodimer.

The protein localises to the cytoplasm. It carries out the reaction malonyl-[ACP] + acetyl-CoA + H(+) = 3-oxobutanoyl-[ACP] + CO2 + CoA. The protein operates within lipid metabolism; fatty acid biosynthesis. Catalyzes the condensation reaction of fatty acid synthesis by the addition to an acyl acceptor of two carbons from malonyl-ACP. Catalyzes the first condensation reaction which initiates fatty acid synthesis and may therefore play a role in governing the total rate of fatty acid production. Possesses both acetoacetyl-ACP synthase and acetyl transacylase activities. Its substrate specificity determines the biosynthesis of branched-chain and/or straight-chain of fatty acids. The chain is Beta-ketoacyl-[acyl-carrier-protein] synthase III from Coxiella burnetii (strain Dugway 5J108-111).